We begin with the raw amino-acid sequence, 380 residues long: SAM and SH3 domain-containing protein 3 (380 aa).

Residues 1–174 (MLRRKPSNAS…STAPQYTGPF (174 aa)) are disordered. Positions 22 to 41 (LQRSSSFKDFAKSKPSSPVV) are enriched in low complexity. Phosphoserine is present on residues serine 27, serine 34, and serine 42. Threonine 61 bears the Phosphothreonine mark. A compositionally biased stretch (basic residues) spans 84-93 (MNRKTGKKMV). Serine 97 carries the phosphoserine modification. Residue threonine 103 is modified to Phosphothreonine. Position 110 is a phosphoserine (serine 110). Threonine 112 is modified (phosphothreonine). Phosphoserine occurs at positions 113 and 120. The span at 143 to 158 (RQASTGSELCSPSPGS) shows a compositional bias: polar residues. The SH3 domain maps to 173-234 (PFCGRARVHT…KFIYVDVLPE (62 aa)). The region spanning 252–316 (PKPKTLHELL…LTAAELLLDY (65 aa)) is the SAM domain. Position 318 is a phosphothreonine (threonine 318). Over residues 318–327 (TGSEEAEEGT) the composition is skewed to acidic residues. The tract at residues 318-380 (TGSEEAEEGT…LHGLSLSGAP (63 aa)) is disordered. Serine 320 is subject to Phosphoserine.

It belongs to the SASH family.

In terms of biological role, may function as a signaling adapter protein in lymphocytes. The protein is SAM and SH3 domain-containing protein 3 of Bos taurus (Bovine).